The primary structure comprises 315 residues: Methionyl-tRNA formyltransferase (315 aa).

Ser115 to Pro118 contributes to the (6S)-5,6,7,8-tetrahydrofolate binding site.

It belongs to the Fmt family.

It carries out the reaction L-methionyl-tRNA(fMet) + (6R)-10-formyltetrahydrofolate = N-formyl-L-methionyl-tRNA(fMet) + (6S)-5,6,7,8-tetrahydrofolate + H(+). In terms of biological role, attaches a formyl group to the free amino group of methionyl-tRNA(fMet). The formyl group appears to play a dual role in the initiator identity of N-formylmethionyl-tRNA by promoting its recognition by IF2 and preventing the misappropriation of this tRNA by the elongation apparatus. The sequence is that of Methionyl-tRNA formyltransferase from Dehalococcoides mccartyi (strain ATCC BAA-2100 / JCM 16839 / KCTC 5957 / BAV1).